A 467-amino-acid polypeptide reads, in one-letter code: Asparagine--tRNA ligase (467 aa).

This sequence belongs to the class-II aminoacyl-tRNA synthetase family. In terms of assembly, homodimer.

The protein resides in the cytoplasm. The catalysed reaction is tRNA(Asn) + L-asparagine + ATP = L-asparaginyl-tRNA(Asn) + AMP + diphosphate + H(+). In Histophilus somni (strain 129Pt) (Haemophilus somnus), this protein is Asparagine--tRNA ligase.